Here is a 565-residue protein sequence, read N- to C-terminus: NAD-dependent malic enzyme (565 aa).

Tyr-104 acts as the Proton donor in catalysis. Residue Arg-157 participates in NAD(+) binding. The Proton acceptor role is filled by Lys-175. Glu-246, Asp-247, and Asp-270 together coordinate a divalent metal cation. The NAD(+) site is built by Asp-270 and Asn-418.

The protein belongs to the malic enzymes family. As to quaternary structure, homotetramer. Mg(2+) serves as cofactor. The cofactor is Mn(2+).

The enzyme catalyses (S)-malate + NAD(+) = pyruvate + CO2 + NADH. The catalysed reaction is oxaloacetate + H(+) = pyruvate + CO2. The chain is NAD-dependent malic enzyme from Salmonella agona (strain SL483).